A 380-amino-acid polypeptide reads, in one-letter code: Putative T-box protein 40 (380 aa).

A DNA-binding region (T-box) is located at residues 11 to 192 (MAEEDRWLTQ…KNATFENRLD (182 aa)). Residues 188–215 (ENRLDGGNKRKNTNSREEPSSKRSKNET) form a disordered region. Over residues 189–215 (NRLDGGNKRKNTNSREEPSSKRSKNET) the composition is skewed to basic and acidic residues.

The protein resides in the nucleus. In Caenorhabditis elegans, this protein is Putative T-box protein 40 (tbx-40).